An 864-amino-acid chain; its full sequence is N-alpha-acetyltransferase 16, NatA auxiliary subunit (864 aa).

TPR repeat units follow at residues 46 to 79 (GETL…DVKS), 80 to 113 (HVCW…DKDN), 148 to 184 (RASW…PPNK), 224 to 257 (LLVE…NAEN), 374 to 407 (LWVQ…TPTL), 409 to 441 (ELFY…DTAD), and 485 to 518 (MWFQ…FFEI). Residues 603–638 (QKKAKLEEERKHAERERQQKNQKKKRDEEEEEASGL) are disordered. A compositionally biased stretch (basic and acidic residues) spans 606–621 (AKLEEERKHAERERQQ).

Component of the N-terminal acetyltransferase A (NatA) complex composed of NAA10 and NAA16.

In terms of biological role, auxillary subunit of the N-terminal acetyltransferase A (NatA) complex which displays alpha (N-terminal) acetyltransferase activity. The polypeptide is N-alpha-acetyltransferase 16, NatA auxiliary subunit (NAA16) (Homo sapiens (Human)).